A 215-amino-acid chain; its full sequence is Cytidylate kinase (215 aa).

10–18 contacts ATP; that stretch reads GPAASGKGT.

Belongs to the cytidylate kinase family. Type 1 subfamily.

It is found in the cytoplasm. It catalyses the reaction CMP + ATP = CDP + ADP. The enzyme catalyses dCMP + ATP = dCDP + ADP. In Bartonella quintana (strain Toulouse) (Rochalimaea quintana), this protein is Cytidylate kinase.